The following is a 320-amino-acid chain: MTLTASPTAARTPAEEKARFEGNKLAKRLARETTRAIADYNMIEAGDKVMVCLSGGKDSYALLDILLSLQKRAPFAFEIIAVNLDQKQPGFPPEILPDYLRALGVPFHIETQDTYSIVTRVIPEGKTMCSLCSRLRRGILYRVASELGATKIALGHHRDDILGTFFLNLFYGGKAKGMPPKLVSDDGRHTVIRPLVYVPESDLIAYAQFKQFPIIPCNLCGSQENLKRKEVGRMIQEWDRKHPGRSWNVFNALSRVVPSHLMDRDLFDFVGLKPTGVADAGGDTAFDQIDPEPDTAGPGCASDAPAGQADGMAEQRVVFR.

Residues S54–S59 carry the PP-loop motif motif. [4Fe-4S] cluster is bound by residues C129, C132, and C220.

It belongs to the TtcA family. In terms of assembly, homodimer. The cofactor is Mg(2+). [4Fe-4S] cluster serves as cofactor.

Its subcellular location is the cytoplasm. The enzyme catalyses cytidine(32) in tRNA + S-sulfanyl-L-cysteinyl-[cysteine desulfurase] + AH2 + ATP = 2-thiocytidine(32) in tRNA + L-cysteinyl-[cysteine desulfurase] + A + AMP + diphosphate + H(+). Its pathway is tRNA modification. Catalyzes the ATP-dependent 2-thiolation of cytidine in position 32 of tRNA, to form 2-thiocytidine (s(2)C32). The sulfur atoms are provided by the cysteine/cysteine desulfurase (IscS) system. This chain is tRNA-cytidine(32) 2-sulfurtransferase, found in Bordetella pertussis (strain Tohama I / ATCC BAA-589 / NCTC 13251).